The following is a 730-amino-acid chain: MTRRKKMVERVTELMDKPDRIRNIGIVAHIDHGKTTLSDNLLAGAGMISEELAGRQLFMDSDEEEQARGITIDASNVSMVHTYGGEEYLINMIDTPGHVDFGGDVTRAMRAVDGAVVVVDAVEGTMPQTETVLRQALKEGVRPVLFINKVDRLVNELKVDEQEMQIRLAKVIDKVNKLIKGMNEKMYNDGWKLDAAKGTVAFGSALYNWAVSVPFMKSSGVSFKDVFEKCNAGDMKWLSKNSPLHAVLLDMVVKHLPNPLQAQDRRIHIIWHGDYNTPEGKAMVACDPNGPVCMMVTDISFDPHAGEVATGRLFSGTLRRGTECYIIGAAKRANRLAQVGIFMGAERIEVEALPAGNIAAVTGLKDAIVGSTVTSLIEMTPFESLKHYSEPVMTVAVEAKSMKDLPKLVEVLRQIAKEDPTVQVSINEETGEHLISGMGELHLEIITGRIKRDKGVDILTSPPIVVYRETITGSVGPVEGKSPNRHNRFYIELEPMDPAIVKMILDGEISMNQQAIERRDALVAAGMDKDEAKNVKAIEATNMFIDMTKGIQYLNETMELVLDGWREALRGGPLADELVQNLKIRLVDVKLHEDAIHRGPAQVIPAVRSAVKAGVLMAGDSLLEPIQKIQITVPSEQMGAATSQIQGRRGQVFDMLSEGDTMTIVGKAPVAELFGFAGDIRSATEGRAMWSTEFAGFELVPAGIVNDVVKDIRKRKGLKEQIPRPDDYLA.

The 242-residue stretch at 19-260 (DRIRNIGIVA…MVVKHLPNPL (242 aa)) folds into the tr-type G domain. Residues 28-35 (AHIDHGKT), 94-98 (DTPGH), and 148-151 (NKVD) contribute to the GTP site. Position 597 is a diphthamide (His-597).

Belongs to the TRAFAC class translation factor GTPase superfamily. Classic translation factor GTPase family. EF-G/EF-2 subfamily.

It localises to the cytoplasm. Its function is as follows. Catalyzes the GTP-dependent ribosomal translocation step during translation elongation. During this step, the ribosome changes from the pre-translocational (PRE) to the post-translocational (POST) state as the newly formed A-site-bound peptidyl-tRNA and P-site-bound deacylated tRNA move to the P and E sites, respectively. Catalyzes the coordinated movement of the two tRNA molecules, the mRNA and conformational changes in the ribosome. The polypeptide is Elongation factor 2 (Methanoculleus marisnigri (strain ATCC 35101 / DSM 1498 / JR1)).